The chain runs to 128 residues: Cytochrome c-type biogenesis protein CcmE (128 aa).

At 1-8 the chain is on the cytoplasmic side; it reads MQKRVRNR. A helical; Signal-anchor for type II membrane protein transmembrane segment spans residues 9 to 29; sequence LITIIICFCSACLGISIILYN. Over 30–128 the chain is Periplasmic; the sequence is LEKNIVFFLP…KHDENYRPPQ (99 aa). The heme site is built by histidine 120 and tyrosine 124.

Belongs to the CcmE/CycJ family.

The protein resides in the cell inner membrane. Heme chaperone required for the biogenesis of c-type cytochromes. Transiently binds heme delivered by CcmC and transfers the heme to apo-cytochromes in a process facilitated by CcmF and CcmH. The protein is Cytochrome c-type biogenesis protein CcmE of Rickettsia conorii (strain ATCC VR-613 / Malish 7).